Reading from the N-terminus, the 78-residue chain is uncharacterized protein (78 aa).

This is an uncharacterized protein from Bacillus subtilis (strain 168).